Consider the following 1020-residue polypeptide: Calcium-transporting ATPase 1 (1020 aa).

M1 carries the N-acetylmethionine modification. At 1–162 (MESYLNENFG…NQFTESPSRG (162 aa)) the chain is on the stromal side. Residues 21–32 (ALQRWRKLCWIV) are interaction with calmodulin. S46 carries the post-translational modification Phosphoserine; by CPK. Residues 163-183 (FWLFVWEALQDTTLMILAACA) form a helical membrane-spanning segment. Topologically, residues 184 to 201 (FVSLIVGILMEGWPIGAH) are lumenal. Residues 202–222 (DGLGIVASILLVVFVTATSDY) form a helical membrane-spanning segment. At 223–350 (RQSLQFKDLD…DDETPLQVKL (128 aa)) the chain is on the stromal side. The helical transmembrane segment at 351 to 370 (NGVATIIGKIGLFFAVITFA) threads the bilayer. Over 371 to 400 (VLVQGLANQKRLDNSHWIWTADELMAMLEY) the chain is Lumenal. The helical transmembrane segment at 401–418 (FAVAVTIVVVAVPEGLPL) threads the bilayer. Residues 419–813 (AVTLSLAFAM…KWGRSVYINI (395 aa)) lie on the Stromal side of the membrane. D456 acts as the 4-aspartylphosphate intermediate in catalysis. Mg(2+) contacts are provided by D758 and D762. A helical membrane pass occupies residues 814-832 (QKFVQFQLTVNVVALIVNF). The Lumenal portion of the chain corresponds to 833 to 843 (LSACLTGNAPL). Residues 844–864 (TAVQLLWVNMIMDTLGALALA) form a helical membrane-spanning segment. At 865-884 (TEPPQDDLMKRSPVGRKGNF) the chain is on the stromal side. Residues 885 to 907 (ISNVMWRNILGQSLYQLVIIWCL) form a helical membrane-spanning segment. Residues 908-919 (QTKGKTMFGLDG) lie on the Lumenal side of the membrane. The chain crosses the membrane as a helical span at residues 920-941 (PDSDLTLNTLIFNIFVFCQVFN). Residues 942–959 (EISSREMEKIDVFKGILK) lie on the Stromal side of the membrane. Residues 960–981 (NYVFVAVLTCTVVFQVIIIELL) traverse the membrane as a helical segment. The Lumenal portion of the chain corresponds to 982 to 991 (GTFADTTPLN). Residues 992-1013 (LGQWLVSIILGFLGMPVAAALK) form a helical membrane-spanning segment. The Stromal segment spans residues 1014-1020 (MIPVGSH).

It belongs to the cation transport ATPase (P-type) (TC 3.A.3) family. Type IIB subfamily. In terms of tissue distribution, expressed at higher levels in roots than in leaves.

The protein localises to the plastid. It localises to the chloroplast inner membrane. It carries out the reaction Ca(2+)(in) + ATP + H2O = Ca(2+)(out) + ADP + phosphate + H(+). Its activity is regulated as follows. Activated by calmodulin. In terms of biological role, this magnesium-dependent enzyme catalyzes the hydrolysis of ATP coupled with the translocation of calcium from the cytosol out of the cell or into organelles. In Arabidopsis thaliana (Mouse-ear cress), this protein is Calcium-transporting ATPase 1 (ACA1).